We begin with the raw amino-acid sequence, 323 residues long: Methionyl-tRNA formyltransferase (323 aa).

115–118 (SLLP) contributes to the (6S)-5,6,7,8-tetrahydrofolate binding site.

The protein belongs to the Fmt family.

The catalysed reaction is L-methionyl-tRNA(fMet) + (6R)-10-formyltetrahydrofolate = N-formyl-L-methionyl-tRNA(fMet) + (6S)-5,6,7,8-tetrahydrofolate + H(+). Its function is as follows. Attaches a formyl group to the free amino group of methionyl-tRNA(fMet). The formyl group appears to play a dual role in the initiator identity of N-formylmethionyl-tRNA by promoting its recognition by IF2 and preventing the misappropriation of this tRNA by the elongation apparatus. This is Methionyl-tRNA formyltransferase from Lactococcus lactis subsp. cremoris (strain SK11).